The primary structure comprises 267 residues: Putative methylsterol monooxygenase DDB_G0270946 (267 aa).

The next 3 membrane-spanning stretches (helical) occupy residues 31-51 (FIAH…ADFI), 72-92 (YCAI…MYIF), and 110-130 (IPYL…YFYW). In terms of domain architecture, Fatty acid hydroxylase spans 119-249 (SSFIIEDFYF…FTYLDKIFGT (131 aa)). A Histidine box-1 motif is present at residues 132–136 (HRALH). Residues 145 to 149 (HKVHH) carry the Histidine box-2 motif. Residues 224–230 (FHDYHHE) carry the Histidine box-3 motif.

It belongs to the sterol desaturase family. Requires Fe cation as cofactor.

The protein localises to the endoplasmic reticulum membrane. The catalysed reaction is 4,4-dimethyl-5alpha-cholest-7-en-3beta-ol + 6 Fe(II)-[cytochrome b5] + 3 O2 + 5 H(+) = 4alpha-carboxy-4beta-methyl-5alpha-cholest-7-ene-3beta-ol + 6 Fe(III)-[cytochrome b5] + 4 H2O. It participates in steroid biosynthesis; zymosterol biosynthesis; zymosterol from lanosterol: step 3/6. This chain is Putative methylsterol monooxygenase DDB_G0270946, found in Dictyostelium discoideum (Social amoeba).